Consider the following 201-residue polypeptide: Cytochrome c oxidase assembly protein CtaG (201 aa).

Topologically, residues 1-12 (MTDQGENEKKQR) are cytoplasmic. The chain crosses the membrane as a helical; Signal-anchor for type II membrane protein span at residues 13 to 35 (RSNATIAVACLSFFVCMIGAAYA). The Periplasmic portion of the chain corresponds to 36 to 201 (SVPLYRIFCQ…KAVGSTRNGG (166 aa)).

The protein belongs to the COX11/CtaG family.

The protein resides in the cell inner membrane. Exerts its effect at some terminal stage of cytochrome c oxidase synthesis, probably by being involved in the insertion of the copper B into subunit I. The protein is Cytochrome c oxidase assembly protein CtaG of Brucella suis biovar 1 (strain 1330).